Consider the following 1500-residue polypeptide: ABC transporter G family member 42 (1500 aa).

The disordered stretch occupies residues 26–56 (VDEAFMPQNSGGGGGSRGRRRSGRGGTADDD). Positions 182–455 (LGLVGVRPGR…FESCGFRCPE (274 aa)) constitute an ABC transporter 1 domain. An ATP-binding site is contributed by 215 to 222 (GPPSSGKT). One can recognise an ABC transmembrane type-2 1 domain in the interval 533-746 (ELLKASFAKE…GYNALAVNEF (214 aa)). The next 7 membrane-spanning stretches (helical) occupy residues 551–571 (FVYIFKTIQLIIVALVASTVF), 584–604 (GFVYIGALLFSLIVNMFNGFA), 639–659 (IPFSIIESIVWVIVTYYTIGF), 670–690 (LLLVFLIQQMAGGLFRATAGL), 695–715 (IIAQTGGALALLIFFVLGGFL), 724–744 (WWIWGYWVSPLMYGYNALAVN), and 783–803 (FWIGAAGLLGFTMFFNVLFTL). The segment covering 822–834 (TAKEAEGNGDARH) has biased composition (basic and acidic residues). Residues 822-850 (TAKEAEGNGDARHTVRNGSTKSNGGNHKE) form a disordered region. The span at 837–846 (RNGSTKSNGG) shows a compositional bias: polar residues. One can recognise an ABC transporter 2 domain in the interval 894–1151 (MSFDDVNYYV…KMIEYFEAIP (258 aa)). An ATP-binding site is contributed by 939 to 946 (GVSGAGKT). Residues 1224-1438 (GQFRACLWKQ…TVYGLIVTQY (215 aa)) enclose the ABC transmembrane type-2 2 domain. The next 7 helical transmembrane spans lie at 1245-1265 (LVRFSFTLFTALLLGTIFWKI), 1277-1297 (MVIGAMYTAVMFIGINNCATV), 1331-1351 (IPYVFVQTAYYTLIVYAMMSF), 1358-1378 (FFWFFFVSYFSFLYFTYYGMM), 1388-1408 (VAAIFAAAFYSLFNLFSGFFI), 1416-1436 (WWIWYYWLCPLAWTVYGLIVT), and 1472-1492 (VVAPVLVLFAVFFAFMYAICI).

The protein belongs to the ABC transporter superfamily. ABCG family. PDR (TC 3.A.1.205) subfamily.

It localises to the membrane. In terms of biological role, may be a general defense protein. The sequence is that of ABC transporter G family member 42 from Oryza sativa subsp. japonica (Rice).